The primary structure comprises 116 residues: MFDKKAARLRRAKKTRAHIRFLGVHRLTVNRTPRHIYAQIISPNGGEVIAQASTLDSSLRSGATGNADAATSVGQMIAERAKAAGITKVAFDRSGFKYHGRVKALAEAARENGLEF.

This sequence belongs to the universal ribosomal protein uL18 family. Part of the 50S ribosomal subunit; part of the 5S rRNA/L5/L18/L25 subcomplex. Contacts the 5S and 23S rRNAs.

In terms of biological role, this is one of the proteins that bind and probably mediate the attachment of the 5S RNA into the large ribosomal subunit, where it forms part of the central protuberance. In Psychrobacter arcticus (strain DSM 17307 / VKM B-2377 / 273-4), this protein is Large ribosomal subunit protein uL18.